The following is a 119-amino-acid chain: Large ribosomal subunit protein bL20 (119 aa).

Belongs to the bacterial ribosomal protein bL20 family.

Its function is as follows. Binds directly to 23S ribosomal RNA and is necessary for the in vitro assembly process of the 50S ribosomal subunit. It is not involved in the protein synthesizing functions of that subunit. The protein is Large ribosomal subunit protein bL20 of Chloroflexus aggregans (strain MD-66 / DSM 9485).